A 402-amino-acid chain; its full sequence is Imidazolonepropionase (402 aa).

Residues His69 and His71 each coordinate Fe(3+). Zn(2+) contacts are provided by His69 and His71. Positions 78, 141, and 174 each coordinate 4-imidazolone-5-propanoate. Tyr141 serves as a coordination point for N-formimidoyl-L-glutamate. A Fe(3+)-binding site is contributed by His239. His239 lines the Zn(2+) pocket. Gln242 lines the 4-imidazolone-5-propanoate pocket. A Fe(3+)-binding site is contributed by Asp314. Residue Asp314 participates in Zn(2+) binding. The N-formimidoyl-L-glutamate site is built by Asn316 and Gly318. Thr319 is a 4-imidazolone-5-propanoate binding site.

This sequence belongs to the metallo-dependent hydrolases superfamily. HutI family. The cofactor is Zn(2+). Requires Fe(3+) as cofactor.

The protein localises to the cytoplasm. The enzyme catalyses 4-imidazolone-5-propanoate + H2O = N-formimidoyl-L-glutamate. The protein operates within amino-acid degradation; L-histidine degradation into L-glutamate; N-formimidoyl-L-glutamate from L-histidine: step 3/3. In terms of biological role, catalyzes the hydrolytic cleavage of the carbon-nitrogen bond in imidazolone-5-propanoate to yield N-formimidoyl-L-glutamate. It is the third step in the universal histidine degradation pathway. This chain is Imidazolonepropionase, found in Maricaulis maris (strain MCS10) (Caulobacter maris).